A 403-amino-acid chain; its full sequence is MNAESCSLILSYISSAPAGNLVLNCTATTNKQTLEANLKSAVYQRYPEFLEDWTNVCVHIIHSYFPKDADYWNVDKLYTSVNRITTLEQSKVVGKEIKNGFTFDAENSTASLENDLQPQFRSHALFMVGSAGPLFSSTARTSRLDSRLPDGGIIAKPVALLPTPSVANSQEYTLDKLSPPSTAKPPASVIEFNPSLAKLPTVKYLQSGPFSSIAPYKNSSSSVIPDSSFHSVACYRASSHYKEAPVEKSIDIDIIQNNLSLLEEDSWTSVPIQGELVELNKLLQHLQLLQNQRITSHNVLSDEERQISVQVQNLILKLAKDYDMSPEDFLMDDFTLSLTQYGAFYRGTLPLSAQPLELPSQQLLRSQSNAALRSNSLSMNGSLSPSSTNVPLQSYRRTTKSRR.

Residues 376-389 (SLSMNGSLSPSSTN) are compositionally biased toward low complexity. Residues 376–403 (SLSMNGSLSPSSTNVPLQSYRRTTKSRR) form a disordered region. Residue S384 is modified to Phosphoserine.

As to quaternary structure, component of the RSC complex composed of at least arp9, arp42, rsc1, rsc4, rsc7, rsc9, rsc58, sfh1, snf21, ssr1, ssr2, ssr3 and ssr4. The complex interacts with histone and histone variant components of centromeric chromatin.

Its subcellular location is the cytoplasm. The protein resides in the nucleus. Its function is as follows. Component of the chromatin structure remodeling complex (RSC), which is involved in transcription regulation and nucleosome positioning. Controls particularly membrane and organelle development genes. The chain is Chromatin structure-remodeling complex subunit rsc58 (rsc58) from Schizosaccharomyces pombe (strain 972 / ATCC 24843) (Fission yeast).